Here is a 312-residue protein sequence, read N- to C-terminus: Glycerol-3-phosphate dehydrogenase [NAD(P)+] (312 aa).

Trp-11, Arg-30, Arg-31, and Lys-95 together coordinate NADPH. Residues Lys-95, Gly-123, and Ser-125 each coordinate sn-glycerol 3-phosphate. An NADPH-binding site is contributed by Ala-127. Positions 177, 230, 240, 241, and 242 each coordinate sn-glycerol 3-phosphate. The active-site Proton acceptor is the Lys-177. Position 241 (Arg-241) interacts with NADPH. Val-265 and Glu-267 together coordinate NADPH.

It belongs to the NAD-dependent glycerol-3-phosphate dehydrogenase family.

Its subcellular location is the cytoplasm. The enzyme catalyses sn-glycerol 3-phosphate + NAD(+) = dihydroxyacetone phosphate + NADH + H(+). The catalysed reaction is sn-glycerol 3-phosphate + NADP(+) = dihydroxyacetone phosphate + NADPH + H(+). It participates in membrane lipid metabolism; glycerophospholipid metabolism. In terms of biological role, catalyzes the reduction of the glycolytic intermediate dihydroxyacetone phosphate (DHAP) to sn-glycerol 3-phosphate (G3P), the key precursor for phospholipid synthesis. The protein is Glycerol-3-phosphate dehydrogenase [NAD(P)+] of Helicobacter pylori (strain Shi470).